The primary structure comprises 86 residues: Co-chaperonin GroES (86 aa).

Belongs to the GroES chaperonin family. As to quaternary structure, heptamer of 7 subunits arranged in a ring. Interacts with the chaperonin GroEL.

It is found in the cytoplasm. Functionally, together with the chaperonin GroEL, plays an essential role in assisting protein folding. The GroEL-GroES system forms a nano-cage that allows encapsulation of the non-native substrate proteins and provides a physical environment optimized to promote and accelerate protein folding. GroES binds to the apical surface of the GroEL ring, thereby capping the opening of the GroEL channel. This is Co-chaperonin GroES from Campylobacter lari (strain RM2100 / D67 / ATCC BAA-1060).